We begin with the raw amino-acid sequence, 216 residues long: Protein U63 (216 aa).

The protein belongs to the herpesviridae UL92 family.

This chain is Protein U63 (U63), found in Homo sapiens (Human).